The chain runs to 66 residues: Cold shock-like protein CspLB (66 aa).

A CSD domain is found at 4 to 63 (GTVKWFNSEKGFGFIEVEGGDDVFVHFSAIEGEGFKTLDEGQSVEFEIVEGQRGPQAEKV).

Homodimer.

The protein localises to the cytoplasm. In Listeria monocytogenes serovar 1/2a (strain ATCC BAA-679 / EGD-e), this protein is Cold shock-like protein CspLB (cspLB).